We begin with the raw amino-acid sequence, 181 residues long: CD160 antigen (181 aa).

The N-terminal stretch at 1–24 (MLLEPGRGCCALAILLAIVDIQSG) is a signal peptide. In terms of domain architecture, Ig-like V-type spans 25-133 (GCINITSSAS…QGHFFSILFT (109 aa)). A glycan (N-linked (GlcNAc...) asparagine) is linked at Asn28. 2 disulfides stabilise this stretch: Cys44–Cys112 and Cys61–Cys68. Asn137 carries an N-linked (GlcNAc...) asparagine glycan. Ser159 carries the GPI-anchor amidated serine lipid modification. Positions 160-181 (SGFLQEKVWVMLVTSLVALQAL) are cleaved as a propeptide — removed in mature form.

In terms of assembly, homomultimer; disulfide-linked. Interacts with HLA-G. Interacts with HLA-A2-B2M in complex with an HIV-derived peptide. Interacts with TNFRSF14 (via cysteine-rich domain 1); this interaction is direct. Interacts with LCK and CD247/CD3 zeta chain. Expression is restricted to functional NK and cytotoxic T lymphocytes. Expressed in viral-specific effector memory and terminally differentiated effector memory CD8+ T cells. Expressed in memory and activated CD4+ T cell subsets (at protein level). Expressed at high levels in intraepithelial lymphocytes (at protein level). Expressed in both alpha-beta and gamma-delta CD8+ T cell subsets (at protein level). Expressed in umbilical vein endothelial cells (at protein level). Expressed in monocytes and at lower levels in B cells. Isoform 3: Expressed exclusively in activated NK cells (at protein level).

It localises to the cell membrane. Its subcellular location is the secreted. In terms of biological role, receptor on immune cells capable to deliver stimulatory or inhibitory signals that regulate cell activation and differentiation. Exists as a GPI-anchored and as a transmembrane form, each likely initiating distinct signaling pathways via phosphoinositol 3-kinase in activated NK cells and via LCK and CD247/CD3 zeta chain in activated T cells. Receptor for both classical and non-classical MHC class I molecules. In the context of acute viral infection, recognizes HLA-C and triggers NK cell cytotoxic activity, likely playing a role in anti-viral innate immune response. On CD8+ T cells, binds HLA-A2-B2M in complex with a viral peptide and provides a costimulatory signal to activated/memory T cells. Upon persistent antigen stimulation, such as occurs during chronic viral infection, may progressively inhibit TCR signaling in memory CD8+ T cells, contributing to T cell exhaustion. On endothelial cells, recognizes HLA-G and controls angiogenesis in immune privileged sites. Receptor or ligand for TNF superfamily member TNFRSF14, participating in bidirectional cell-cell contact signaling between antigen presenting cells and lymphocytes. Upon ligation of TNFRSF14, provides stimulatory signal to NK cells enhancing IFNG production and anti-tumor immune response. On activated CD4+ T cells, interacts with TNFRSF14 and down-regulates CD28 costimulatory signaling, restricting memory and alloantigen-specific immune response. In the context of bacterial infection, acts as a ligand for TNFRSF14 on epithelial cells, triggering the production of antimicrobial proteins and pro-inflammatory cytokines. The soluble GPI-cleaved form, usually released by activated lymphocytes, might play an immune regulatory role by limiting lymphocyte effector functions. This is CD160 antigen from Homo sapiens (Human).